A 706-amino-acid chain; its full sequence is MSGGDTRAAIARPRMAAAHGPVAPSSPEQVTLLPVQRSFFLPPFSGATPSTSLAESVLKVWHGAYNSGLLPQLMAQHSLAMAQNGAVPSEATKRDQNLKRGNWGNQIEFVLTSVGYAVGLGNVWRFPYLCYRNGGGAFMFPYFIMLIFCGIPLFFMELSFGQFASQGCLGVWRISPMFKGVGYGMMVVSTYIGIYYNVVICIAFYYFFSSMTHVLPWAYCNNPWNTHDCAGVLDASNLTNGSRPAALPSNLSHLLNHSLQRTSPSEEYWRLYVLKLSDDIGNFGEVRLPLLGCLGVSWLVVFLCLIRGVKSSGKVVYFTATFPYVVLTILFVRGVTLEGAFDGIMYYLTPQWDKILEAKVWGDAASQIFYSLGCAWGGLITMASYNKFHNNCYRDSVIISITNCATSVYAGFVIFSILGFMANHLGVDVSRVADHGPGLAFVAYPEALTLLPISPLWSLLFFFMLILLGLGTQFCLLETLVTAIVDEVGNEWILQKKTYVTLGVAVAGFLLGIPLTSQAGIYWLLLMDNYAASFSLVVISCIMCVAIMYIYGHRNYFQDIQMMLGFPPPLFFQICWRFVSPAIIFFILVFTVIQYQPITYNHYQYPGWAVAIGFLMALSSVLCIPLYAMFRLCRTDGDTLLQRLKNATKPSRDWGPALLEHRTGRYAPTIAPSPEDGFEVQPLHPDKAQIPIVGSNGSSRLQDSRI.

The segment at 1 to 26 (MSGGDTRAAIARPRMAAAHGPVAPSS) is disordered. Topologically, residues 1 to 108 (MSGGDTRAAI…KRGNWGNQIE (108 aa)) are cytoplasmic. Over residues 7 to 18 (RAAIARPRMAAA) the composition is skewed to low complexity. 3 helical membrane passes run 109–129 (FVLT…FPYL), 136–156 (GAFM…LFFM), and 188–208 (VSTY…YYFF). Topologically, residues 209-285 (SSMTHVLPWA…LSDDIGNFGE (77 aa)) are extracellular. The next 9 helical transmembrane spans lie at 286-306 (VRLP…LCLI), 315-335 (VVYF…VRGV), 360-380 (VWGD…GGLI), 407-427 (SVYA…HLGV), 450-470 (LLPI…LLGL), 506-526 (VAGF…WLLL), 530-550 (YAAS…IMYI), 570-590 (LFFQ…ILVF), and 610-630 (VAIG…YAMF). Over 631–706 (RLCRTDGDTL…GSSRLQDSRI (76 aa)) the chain is Cytoplasmic. Phosphoserine occurs at positions 673 and 698. The segment at 695 to 706 (SNGSSRLQDSRI) is essential for interaction with EXOC1.

Belongs to the sodium:neurotransmitter symporter (SNF) (TC 2.A.22) family. SLC6A9 subfamily. Interacts with EXOC1; interaction increases the transporter capacity of SLC6A9 probably by promoting its insertion into the cell membrane. Interacts with EXOC3 and EXOC4. Expressed in the brain, kidney, pancreas, lung, placenta and liver. As to expression, expressed only in the brain.

Its subcellular location is the cell membrane. It carries out the reaction glycine(out) + chloride(out) + 2 Na(+)(out) = glycine(in) + chloride(in) + 2 Na(+)(in). Its activity is regulated as follows. Inhibited by sarcosine. Its function is as follows. Sodium- and chloride-dependent glycine transporter. Essential for regulating glycine concentrations at inhibitory glycinergic synapses. In terms of biological role, sodium- and chloride-dependent glycine transporter. The polypeptide is Sodium- and chloride-dependent glycine transporter 1 (SLC6A9) (Homo sapiens (Human)).